A 185-amino-acid polypeptide reads, in one-letter code: Threonylcarbamoyl-AMP synthase (185 aa).

The 182-residue stretch at 4 to 185 (SFRAQCAARV…LVTGQVIRPA (182 aa)) folds into the YrdC-like domain.

It belongs to the SUA5 family. TsaC subfamily.

The protein localises to the cytoplasm. The catalysed reaction is L-threonine + hydrogencarbonate + ATP = L-threonylcarbamoyladenylate + diphosphate + H2O. Functionally, required for the formation of a threonylcarbamoyl group on adenosine at position 37 (t(6)A37) in tRNAs that read codons beginning with adenine. Catalyzes the conversion of L-threonine, HCO(3)(-)/CO(2) and ATP to give threonylcarbamoyl-AMP (TC-AMP) as the acyladenylate intermediate, with the release of diphosphate. The polypeptide is Threonylcarbamoyl-AMP synthase (Pseudomonas paraeruginosa (strain DSM 24068 / PA7) (Pseudomonas aeruginosa (strain PA7))).